The following is a 73-amino-acid chain: Accessory secretory protein Asp5 (73 aa).

The signal sequence occupies residues 1–30 (MQKLLLILTILLALILITLVISLPRENQQF). A helical transmembrane segment spans residues 52-72 (IILLIVSILLFLTLIFYMIQT).

In terms of assembly, part of the accessory SecA2/SecY2 protein translocation apparatus required to export cell wall protein GspB.

The protein localises to the cell membrane. In terms of biological role, part of the accessory SecA2/SecY2 system specifically required to export GspB, a serine-rich repeat cell wall protein encoded upstream in the same operon. The polypeptide is Accessory secretory protein Asp5 (asp5) (Streptococcus gordonii).